Here is a 517-residue protein sequence, read N- to C-terminus: Crotonobetaine/carnitine--CoA ligase (517 aa).

It belongs to the ATP-dependent AMP-binding enzyme family.

The enzyme catalyses 4-(trimethylamino)butanoate + ATP + CoA = 4-(trimethylamino)butanoyl-CoA + AMP + diphosphate. It catalyses the reaction crotonobetaine + ATP + CoA = crotonobetainyl-CoA + AMP + diphosphate. The catalysed reaction is (R)-carnitine + ATP + CoA = (R)-carnitinyl-CoA + AMP + diphosphate. It functions in the pathway amine and polyamine metabolism; carnitine metabolism. Functionally, catalyzes the transfer of CoA to carnitine, generating the initial carnitinyl-CoA needed for the CaiB reaction cycle. Also has activity toward crotonobetaine and gamma-butyrobetaine. The chain is Crotonobetaine/carnitine--CoA ligase from Escherichia coli O1:K1 / APEC.